A 708-amino-acid polypeptide reads, in one-letter code: Assimilatory nitrate reductase (708 aa).

Positions Thr-15–Trp-73 constitute a 4Fe-4S Mo/W bis-MGD-type domain. Cys-22, Cys-25, Cys-29, and Cys-59 together coordinate [4Fe-4S] cluster. Residues Thr-586–Asn-613 form a disordered region.

It belongs to the prokaryotic molybdopterin-containing oxidoreductase family. NasA/NapA/NarB subfamily. In terms of assembly, is probably a monomer. Initially characterized as a dimer of proteins with a MW of 105 and 50 kDa. [4Fe-4S] cluster serves as cofactor. It depends on Mo-bis(molybdopterin guanine dinucleotide) as a cofactor.

Its subcellular location is the cytoplasm. The enzyme catalyses nitrite + 2 oxidized [2Fe-2S]-[ferredoxin] + H2O = nitrate + 2 reduced [2Fe-2S]-[ferredoxin] + 2 H(+). Its pathway is nitrogen metabolism; nitrate reduction (assimilation). Its activity is regulated as follows. Inhibited by cyanide and azide. Nitrate reductase is a key enzyme involved in the first step of nitrate assimilation. Catalyzes the reduction of nitrate to nitrite, using ferredoxin as the electron donor. Can use reduced methyl viologen but neither NADPH nor NADH as electron donors. The sequence is that of Assimilatory nitrate reductase from Haloferax mediterranei (strain ATCC 33500 / DSM 1411 / JCM 8866 / NBRC 14739 / NCIMB 2177 / R-4) (Halobacterium mediterranei).